The following is a 637-amino-acid chain: Multicopper oxidase LPR1 homolog 5 (637 aa).

The first 21 residues, 1 to 21 (MSPRIQQLAAVLLAAVVVVAA), serve as a signal peptide directing secretion. Asparagine 100 carries an N-linked (GlcNAc...) asparagine glycan. The Cu cation site is built by histidine 209 and histidine 211. A glycan (N-linked (GlcNAc...) asparagine) is linked at asparagine 234. Residues histidine 257 and histidine 259 each contribute to the Cu cation site. N-linked (GlcNAc...) asparagine glycosylation is found at asparagine 308, asparagine 349, asparagine 357, asparagine 425, asparagine 482, and asparagine 516. Positions 334-406 (PYLSVQRRRY…IVDFSRLPAA (73 aa)) constitute a Plastocyanin-like domain. The Cu cation site is built by histidine 522, histidine 525, and histidine 527. An N-linked (GlcNAc...) asparagine glycan is attached at asparagine 553. Histidine 618, cysteine 619, histidine 620, histidine 624, and methionine 629 together coordinate Cu cation.

This sequence belongs to the multicopper oxidase family. Cu cation is required as a cofactor. In terms of tissue distribution, highly expressed in roots and basal stems.

It localises to the endoplasmic reticulum membrane. In terms of biological role, multicopper oxidase that may play a role in the maintenance of inorganic phosphate homeostasis. The polypeptide is Multicopper oxidase LPR1 homolog 5 (Oryza sativa subsp. japonica (Rice)).